We begin with the raw amino-acid sequence, 396 residues long: Anhydro-N-acetylmuramic acid kinase (396 aa).

Position 19–26 (G19–D26) interacts with ATP.

The protein belongs to the anhydro-N-acetylmuramic acid kinase family.

It carries out the reaction 1,6-anhydro-N-acetyl-beta-muramate + ATP + H2O = N-acetyl-D-muramate 6-phosphate + ADP + H(+). It functions in the pathway amino-sugar metabolism; 1,6-anhydro-N-acetylmuramate degradation. The protein operates within cell wall biogenesis; peptidoglycan recycling. Its function is as follows. Catalyzes the specific phosphorylation of 1,6-anhydro-N-acetylmuramic acid (anhMurNAc) with the simultaneous cleavage of the 1,6-anhydro ring, generating MurNAc-6-P. Is required for the utilization of anhMurNAc either imported from the medium or derived from its own cell wall murein, and thus plays a role in cell wall recycling. This is Anhydro-N-acetylmuramic acid kinase from Colwellia psychrerythraea (strain 34H / ATCC BAA-681) (Vibrio psychroerythus).